The sequence spans 887 residues: FLCFISSYSASVKGHTTGLSLNNDRLYKLTYSTEVFLDRGKGNLQDSVGYRISSNVDVALLWRSPDGDDNQLIQITMKDVNLENVNQQRGEKSIFKGKKSSQIIRKENLEAMQRPVLLHLIHGKIKEFYSYQNEPAAIENLKRGLASLFQMQLSSGTTNEVDISGDCKVTYQAHQDKVTKIKALDSCKIERAGFTTPHQVLGVTSKATSVTTYKIEDSFVVAVLSEEIRALRLNFLQSIAGKIVSRQKLELKTTEASVRLKPGKQVAAIIKAVDSKYTAIPIVGQVFQSKCKGCPSLSEHWQSIRKHLQPDNLSKAEAVRSFLAFIKHLRTAKKEEILQILKAENKEVLPQLVDAVTSAQTPDSLDAILDFLDFKSTESVILQERFLYACAFASHPDEELLRALISKFKGSFGSNDIRESVMIIIGALVRKLCQNQGCKLKGVIEAKKLILGGLEKAEKKEDIVMYLLALKNARLPEGIPLLLKYTETGEGPISHLAATTLQRYDVPFITDEVKKTMNRIYHQNRKIHEKTVRTTAAAIILKNNPSYMEVKNILLSIGELPKEMNKYMLSIVQDILRFETPASKMVRQVLKEMVAHNYDRFSKSGSSSAYTGYVERTSHSASTYSLDILYSGSGILRRSNLNIFQYIEKTPLHGIQVVIEAQGLEALIAATPDEGEENLDSYAGLSALLFDVQLRPVTFFNGYSDLMSKMLSASSDPMSVVKGLLLLIDHSQELQLQSGLKANMDVQGGLAIDITGAMEFSLWYRESKTRVKNRVSVLITGGITVDSSFVKAGLEIGAETEAGLEFISTVQFSQYPFLVCLQMDKEDVPYRQFETKYERLSTGRGYISRKRKESLIGGCEFPLHQENSDMCKVVFAPQPESSSSGWF.

The signal sequence occupies residues 1 to 11 (FLCFISSYSAS). The Vitellogenin domain occupies 21 to 655 (LNNDRLYKLT…YIEKTPLHGI (635 aa)). A disulfide bridge links cysteine 167 with cysteine 187.

In terms of assembly, heterodimer; heterodimerizes with the protein disulfide isomerase (P4HB/PDI). Interacts with APOB. Interacts with PRAP1.

The protein localises to the endoplasmic reticulum. It is found in the golgi apparatus. It catalyses the reaction a 1,2-diacyl-sn-glycero-3-phosphocholine(in) = a 1,2-diacyl-sn-glycero-3-phosphocholine(out). The catalysed reaction is a 1,2-diacyl-sn-glycero-3-phosphoethanolamine(in) = a 1,2-diacyl-sn-glycero-3-phosphoethanolamine(out). It carries out the reaction a cholesterol ester(in) = a cholesterol ester(out). The enzyme catalyses a triacyl-sn-glycerol(in) = a triacyl-sn-glycerol(out). Catalyzes the transport of triglyceride, cholesteryl ester, and phospholipid between phospholipid surfaces. Required for the assembly and secretion of plasma lipoproteins that contain apolipoprotein B. May be involved in regulating cholesteryl ester biosynthesis in cells that produce lipoproteins. This chain is Microsomal triglyceride transfer protein large subunit (MTTP), found in Bos taurus (Bovine).